Here is a 246-residue protein sequence, read N- to C-terminus: NAD-dependent protein deacylase (246 aa).

Positions 2 to 246 constitute a Deacetylase sirtuin-type domain; that stretch reads PTAVSDAAAP…AGVCLPAMLA (245 aa). NAD(+) is bound at residue 29-49; sequence GAGVSAESGVPTFRDALTGLW. Substrate-binding residues include Tyr-74 and Arg-77. An NAD(+)-binding site is contributed by 107–110; it reads QNVD. His-125 (proton acceptor) is an active-site residue. Zn(2+)-binding residues include Cys-137, Cys-140, Cys-153, and Cys-156. NAD(+) is bound by residues 193 to 195, 219 to 221, and Ala-237; these read GTS and NPE.

This sequence belongs to the sirtuin family. Class III subfamily. Zn(2+) serves as cofactor.

Its subcellular location is the cytoplasm. The catalysed reaction is N(6)-acetyl-L-lysyl-[protein] + NAD(+) + H2O = 2''-O-acetyl-ADP-D-ribose + nicotinamide + L-lysyl-[protein]. The enzyme catalyses N(6)-succinyl-L-lysyl-[protein] + NAD(+) + H2O = 2''-O-succinyl-ADP-D-ribose + nicotinamide + L-lysyl-[protein]. NAD-dependent lysine deacetylase and desuccinylase that specifically removes acetyl and succinyl groups on target proteins. Modulates the activities of several proteins which are inactive in their acylated form. The sequence is that of NAD-dependent protein deacylase from Ralstonia nicotianae (strain ATCC BAA-1114 / GMI1000) (Ralstonia solanacearum).